Consider the following 624-residue polypeptide: uncharacterized protein (624 aa).

A signal peptide spans 1–29 (MRFHRQGTAATVGVLLIVLLGFCWKLSES). N68, N150, N219, N366, N441, N447, N464, and N528 each carry an N-linked (GlcNAc...) asparagine glycan. The tract at residues 141–174 (LERRHGRFGNGTHGDHPKGPPPPPPPDEKDRGSQ) is disordered.

The protein localises to the secreted. This is an uncharacterized protein from Saccharomyces cerevisiae (strain ATCC 204508 / S288c) (Baker's yeast).